Reading from the N-terminus, the 804-residue chain is Serine/threonine-protein kinase ATG1 (804 aa).

A Protein kinase domain is found at 12-308 (FTIGPEIGRG…FQEFFNDPLI (297 aa)). ATP contacts are provided by residues 18 to 26 (IGRGSFANV) and Lys-41. Catalysis depends on Asp-158, which acts as the Proton acceptor. 3 disordered regions span residues 339–364 (TSPP…ERAP), 395–415 (INKS…KGAR), and 455–506 (PSPH…MPIS). The span at 404 to 415 (TVKDGQIKKGAR) shows a compositional bias: basic and acidic residues. Residues 462-495 (NEHSAANPSGPTETQTQRRFSPSSRTSSIGSNRR) show a composition bias toward polar residues.

This sequence belongs to the protein kinase superfamily. Ser/Thr protein kinase family. APG1/unc-51/ULK1 subfamily. Homodimer. Forms a ternary complex with ATG13 and ATG17.

It is found in the cytoplasm. The protein resides in the preautophagosomal structure membrane. It catalyses the reaction L-seryl-[protein] + ATP = O-phospho-L-seryl-[protein] + ADP + H(+). The catalysed reaction is L-threonyl-[protein] + ATP = O-phospho-L-threonyl-[protein] + ADP + H(+). Serine/threonine protein kinase involved in the cytoplasm to vacuole transport (Cvt) and found to be essential in autophagy, where it is required for the formation of autophagosomes. Involved in the clearance of protein aggregates which cannot be efficiently cleared by the proteasome. Required for selective autophagic degradation of the nucleus (nucleophagy) as well as for mitophagy which contributes to regulate mitochondrial quantity and quality by eliminating the mitochondria to a basal level to fulfill cellular energy requirements and preventing excess ROS production. Also involved in endoplasmic reticulum-specific autophagic process, in selective removal of ER-associated degradation (ERAD) substrates. Plays a key role in ATG9 and ATG23 cycling through the pre-autophagosomal structure and is necessary to promote ATG18 binding to ATG9 through phosphorylation of ATG9. Catalyzes phosphorylation of ATG4, decreasing the interaction between ATG4 and ATG8 and impairing deconjugation of PE-conjugated forms of ATG8. This is Serine/threonine-protein kinase ATG1 from Pichia angusta (Yeast).